Here is a 356-residue protein sequence, read N- to C-terminus: GTPase HflX (356 aa).

In terms of domain architecture, Hflx-type G spans Pro180–Ser356. GTP is bound by residues Gly186–Thr193, Phe211–Ser215, Asp232–Gly235, Asn300–Asp303, and Ser334–Leu336. Mg(2+) contacts are provided by Thr193 and Thr213.

Belongs to the TRAFAC class OBG-HflX-like GTPase superfamily. HflX GTPase family. In terms of assembly, monomer. Associates with the 50S ribosomal subunit. Does not associate with 70S ribosomes. Requires Mg(2+) as cofactor.

Its subcellular location is the cytoplasm. GTPase activity is stimulated by the presence of 50S ribosomal subunits. Hydrolysis is probably regulated by the HflX N-terminal domain. Its function is as follows. GTPase that associates with the 50S ribosomal subunit and may have a role during protein synthesis or ribosome biogenesis. Specific for GTP. This chain is GTPase HflX, found in Saccharolobus solfataricus (strain ATCC 35092 / DSM 1617 / JCM 11322 / P2) (Sulfolobus solfataricus).